The sequence spans 80 residues: Trefoil factor 3 (80 aa).

A signal peptide spans 1-21 (MEARMFWLLVVLLALASSSSA). One can recognise a P-type domain in the interval 30 to 73 (NQCAVPAKDRVDCGYPQVTPEQCNNRGCCFDSSIXGVPWCFKPL). Cystine bridges form between cysteine 32–cysteine 58, cysteine 42–cysteine 57, and cysteine 52–cysteine 69.

As to quaternary structure, monomer. Homodimer; disulfide-linked.

Its subcellular location is the secreted. It is found in the extracellular space. It localises to the extracellular matrix. The protein localises to the cytoplasm. Its function is as follows. Involved in the maintenance and repair of the intestinal mucosa. Promotes the mobility of epithelial cells in healing processes (motogen). The chain is Trefoil factor 3 (TFF3) from Sus scrofa (Pig).